A 142-amino-acid chain; its full sequence is Small ribosomal subunit protein uS12 (142 aa).

The interval 1–44 (MANGKYAARKLKQDRQQRRWSDSEYARRERGLGAKSDPLEGAPQ) is disordered. Residues 11–32 (LKQDRQQRRWSDSEYARRERGL) are compositionally biased toward basic and acidic residues.

Belongs to the universal ribosomal protein uS12 family. Part of the 30S ribosomal subunit.

Functionally, with S4 and S5 plays an important role in translational accuracy. Located at the interface of the 30S and 50S subunits. This Haloquadratum walsbyi (strain DSM 16790 / HBSQ001) protein is Small ribosomal subunit protein uS12.